The chain runs to 315 residues: Malate dehydrogenase (315 aa).

NAD(+)-binding positions include 7–12 and Asp-32; that span reads GAGNIG. Residues Arg-81 and Arg-87 each coordinate substrate. NAD(+) is bound by residues Asn-94 and 117–119; that span reads VTN. Substrate contacts are provided by Asn-119 and Arg-150. The Proton acceptor role is filled by His-174.

It belongs to the LDH/MDH superfamily. MDH type 3 family.

It catalyses the reaction (S)-malate + NAD(+) = oxaloacetate + NADH + H(+). Catalyzes the reversible oxidation of malate to oxaloacetate. The polypeptide is Malate dehydrogenase (Neorickettsia sennetsu (strain ATCC VR-367 / Miyayama) (Ehrlichia sennetsu)).